A 302-amino-acid chain; its full sequence is 4-hydroxy-tetrahydrodipicolinate synthase (302 aa).

Thr46 lines the pyruvate pocket. The active-site Proton donor/acceptor is Tyr134. The active-site Schiff-base intermediate with substrate is the Lys162. Position 204 (Val204) interacts with pyruvate.

The protein belongs to the DapA family. As to quaternary structure, homotetramer; dimer of dimers.

It localises to the cytoplasm. It catalyses the reaction L-aspartate 4-semialdehyde + pyruvate = (2S,4S)-4-hydroxy-2,3,4,5-tetrahydrodipicolinate + H2O + H(+). It participates in amino-acid biosynthesis; L-lysine biosynthesis via DAP pathway; (S)-tetrahydrodipicolinate from L-aspartate: step 3/4. Catalyzes the condensation of (S)-aspartate-beta-semialdehyde [(S)-ASA] and pyruvate to 4-hydroxy-tetrahydrodipicolinate (HTPA). The polypeptide is 4-hydroxy-tetrahydrodipicolinate synthase (Xanthomonas campestris pv. campestris (strain ATCC 33913 / DSM 3586 / NCPPB 528 / LMG 568 / P 25)).